The primary structure comprises 309 residues: Probable manganese-dependent inorganic pyrophosphatase (309 aa).

6 residues coordinate Mn(2+): H9, D13, D15, D75, H97, and D149.

The protein belongs to the PPase class C family. Requires Mn(2+) as cofactor.

Its subcellular location is the cytoplasm. The enzyme catalyses diphosphate + H2O = 2 phosphate + H(+). This chain is Probable manganese-dependent inorganic pyrophosphatase, found in Bacillus cereus (strain ZK / E33L).